The sequence spans 198 residues: Chorion protein S19 (198 aa).

A signal peptide spans Met-1 to Ala-16.

The protein belongs to the chorion protein S19 family.

It is found in the secreted. Its function is as follows. Chorion membrane (egg shell) protein; plays a role in protecting the egg from the environment. The chain is Chorion protein S19 (Cp19) from Drosophila virilis (Fruit fly).